The following is a 907-amino-acid chain: Protein translocase subunit SecA (907 aa).

ATP is bound by residues Gln-86, 104–108, and Asp-511; that span reads GEGKT. 2 stretches are compositionally biased toward basic and acidic residues: residues 838–856 and 869–888; these read AQEEWKESMSEIKAEHESV and EEAPKVQQVKREGPKIKRND. The disordered stretch occupies residues 838–907; the sequence is AQEEWKESMS…YKQCHGKVVD (70 aa). Residues Cys-890, Cys-892, Cys-901, and His-902 each contribute to the Zn(2+) site. Basic residues predominate over residues 896 to 907; the sequence is KKYKQCHGKVVD.

It belongs to the SecA family. As to quaternary structure, monomer and homodimer. Part of the essential Sec protein translocation apparatus which comprises SecA, SecYEG and auxiliary proteins SecDF-YajC and YidC. Zn(2+) is required as a cofactor.

Its subcellular location is the cell inner membrane. It localises to the cytoplasm. It carries out the reaction ATP + H2O + cellular proteinSide 1 = ADP + phosphate + cellular proteinSide 2.. In terms of biological role, part of the Sec protein translocase complex. Interacts with the SecYEG preprotein conducting channel. Has a central role in coupling the hydrolysis of ATP to the transfer of proteins into and across the cell membrane, serving both as a receptor for the preprotein-SecB complex and as an ATP-driven molecular motor driving the stepwise translocation of polypeptide chains across the membrane. This is Protein translocase subunit SecA from Francisella philomiragia subsp. philomiragia (strain ATCC 25017 / CCUG 19701 / FSC 153 / O#319-036).